A 31-amino-acid chain; its full sequence is MYMDIVSLAWAALMVVFTFSLSLVVWGRSGL.

The helical transmembrane segment at 5–25 (IVSLAWAALMVVFTFSLSLVV) threads the bilayer.

It belongs to the PetN family. As to quaternary structure, the 4 large subunits of the cytochrome b6-f complex are cytochrome b6, subunit IV (17 kDa polypeptide, PetD), cytochrome f and the Rieske protein, while the 4 small subunits are PetG, PetL, PetM and PetN. The complex functions as a dimer.

It localises to the plastid. The protein localises to the chloroplast thylakoid membrane. Its function is as follows. Component of the cytochrome b6-f complex, which mediates electron transfer between photosystem II (PSII) and photosystem I (PSI), cyclic electron flow around PSI, and state transitions. In Cicer arietinum (Chickpea), this protein is Cytochrome b6-f complex subunit 8.